A 387-amino-acid polypeptide reads, in one-letter code: Gamma-butyrobetaine dioxygenase (387 aa).

The Zn(2+) site is built by cysteine 38, cysteine 40, cysteine 43, and histidine 82. Fe cation is bound by residues histidine 202, aspartate 204, and histidine 347. Residue serine 351 is modified to Phosphoserine.

It belongs to the gamma-BBH/TMLD family. It depends on Fe(2+) as a cofactor. L-ascorbate is required as a cofactor.

It is found in the cytoplasm. It catalyses the reaction 4-(trimethylamino)butanoate + 2-oxoglutarate + O2 = carnitine + succinate + CO2. The protein operates within amine and polyamine biosynthesis; carnitine biosynthesis. Its function is as follows. Catalyzes the formation of L-carnitine from gamma-butyrobetaine. The protein is Gamma-butyrobetaine dioxygenase (BBOX1) of Pongo abelii (Sumatran orangutan).